The sequence spans 124 residues: Small ribosomal subunit protein eS8 (124 aa).

Basic residues predominate over residues 1 to 22; that stretch reads MQYQGRSKRSKTGARLRPRSKK. 2 disordered regions span residues 1–40 and 102–124; these read MQYQGRSKRSKTGARLRPRSKKSKSELGREPTETTVGEPR and AGTARVTSRPGQDGQVNATRVDE. Basic and acidic residues predominate over residues 23-32; it reads SKSELGREPT. Residues 106 to 124 show a composition bias toward polar residues; that stretch reads RVTSRPGQDGQVNATRVDE.

The protein belongs to the eukaryotic ribosomal protein eS8 family. Part of the 30S ribosomal subunit.

This chain is Small ribosomal subunit protein eS8, found in Halobacterium salinarum (strain ATCC 29341 / DSM 671 / R1).